Consider the following 212-residue polypeptide: Maleylpyruvate isomerase (212 aa).

The GST N-terminal domain maps to 1 to 80 (MKLYNFWRSG…WLEEQYPTPA (80 aa)). Glutathione is bound by residues 9 to 11 (SGT), H38, V52, 64 to 65 (QS), 102 to 104 (DIH), 108 to 110 (NRR), and R176. In terms of domain architecture, GST C-terminal spans 85–212 (DADGRQRVRA…AAPAAQPDSA (128 aa)).

This sequence belongs to the GST superfamily. Zeta family. In terms of assembly, homodimer. Requires glutathione as cofactor.

It carries out the reaction 3-maleylpyruvate = 3-fumarylpyruvate. It functions in the pathway aromatic compound metabolism; naphthalene degradation. Its function is as follows. Catalyzes the GSH-dependent isomerization of maleylpyruvate to fumarylpyruvate which is subsequently processed by NagK to form pyruvate and fumarate. The protein is Maleylpyruvate isomerase of Ralstonia sp.